The primary structure comprises 348 residues: 11-beta-hydroxysteroid dehydrogenase A (348 aa).

Residues 10–30 form a helical; Signal-anchor for type II membrane protein membrane-spanning segment; that stretch reads LIAPPFTFFFLLFFLPPFQIF. The short motif at 13–26 is the Proline-knob element; the sequence is PPFTFFFLLFFLPP. NADP(+) contacts are provided by residues 54–80, Asp105, and 132–135; these read GASS…AARR and NAGI. Substrate is bound at residue Ser184. The active-site Proton acceptor is Tyr197. NADP(+) is bound by residues 197-201 and Lys201; that span reads YNASK.

Belongs to the short-chain dehydrogenases/reductases (SDR) family. As to expression, expressed in seeds (at protein level). Not expressed in stem, leaf or root (at protein level).

It is found in the lipid droplet. The protein localises to the membrane. The enzyme catalyses an 11beta-hydroxysteroid + NADP(+) = an 11-oxosteroid + NADPH + H(+). It catalyses the reaction an 11beta-hydroxysteroid + NAD(+) = an 11-oxosteroid + NADH + H(+). It carries out the reaction corticosterone + NADP(+) = 11-dehydrocorticosterone + NADPH + H(+). The catalysed reaction is corticosterone + NAD(+) = 11-dehydrocorticosterone + NADH + H(+). The enzyme catalyses 17beta-estradiol + NADP(+) = estrone + NADPH + H(+). It catalyses the reaction 17beta-estradiol + NAD(+) = estrone + NADH + H(+). In terms of biological role, has dehydrogenase activity against corticosterone (11 beta-hydroxysteroid) and estradiol (17 beta-hydroxysteroid), with higher activity against estradiol. Possesses higher dehydrogenase activity with NADP(+) than NAD(+) regardless of the sterol substrate. May be involved in signal transduction regulated by various sterols. This is 11-beta-hydroxysteroid dehydrogenase A from Sesamum indicum (Oriental sesame).